A 269-amino-acid polypeptide reads, in one-letter code: GATA transcription factor 3 (269 aa).

Residues 136 to 143 (KPRTKRSR) carry the Nuclear localization signal motif. The GATA-type zinc finger occupies 176–230 (LVFQRRCSHCGTNNTPQWRTGPVGPKTLCNACGVRFKSGRLCPEYRPADSPTFSN). Residues 245–269 (KSKELGEETGEASTKSDPVKFGSKW) form a disordered region.

It belongs to the type IV zinc-finger family. Class A subfamily. Mostly expressed in roots. Also expressed in stems, flowers and leaves.

It is found in the nucleus. Functionally, transcriptional activator that specifically binds 5'-GATA-3' or 5'-GAT-3' motifs within gene promoters. May be involved in the regulation of some light-responsive genes. The sequence is that of GATA transcription factor 3 (GATA3) from Arabidopsis thaliana (Mouse-ear cress).